The sequence spans 320 residues: tRNA-cytidine(32) 2-sulfurtransferase (320 aa).

Residues 54–59 (SGGKDS) carry the PP-loop motif motif. Cysteine 129, cysteine 132, and cysteine 220 together coordinate [4Fe-4S] cluster.

It belongs to the TtcA family. As to quaternary structure, homodimer. It depends on Mg(2+) as a cofactor. [4Fe-4S] cluster is required as a cofactor.

The protein localises to the cytoplasm. The catalysed reaction is cytidine(32) in tRNA + S-sulfanyl-L-cysteinyl-[cysteine desulfurase] + AH2 + ATP = 2-thiocytidine(32) in tRNA + L-cysteinyl-[cysteine desulfurase] + A + AMP + diphosphate + H(+). Its pathway is tRNA modification. In terms of biological role, catalyzes the ATP-dependent 2-thiolation of cytidine in position 32 of tRNA, to form 2-thiocytidine (s(2)C32). The sulfur atoms are provided by the cysteine/cysteine desulfurase (IscS) system. The protein is tRNA-cytidine(32) 2-sulfurtransferase of Bordetella bronchiseptica (strain ATCC BAA-588 / NCTC 13252 / RB50) (Alcaligenes bronchisepticus).